Reading from the N-terminus, the 247-residue chain is tRNA uridine(34) hydroxylase (247 aa).

The region spanning 124–218 (TKQDVIVIDT…YLEDTQNKNN (95 aa)) is the Rhodanese domain. Cys178 serves as the catalytic Cysteine persulfide intermediate.

This sequence belongs to the TrhO family.

The catalysed reaction is uridine(34) in tRNA + AH2 + O2 = 5-hydroxyuridine(34) in tRNA + A + H2O. In terms of biological role, catalyzes oxygen-dependent 5-hydroxyuridine (ho5U) modification at position 34 in tRNAs. The chain is tRNA uridine(34) hydroxylase from Rickettsia africae (strain ESF-5).